The chain runs to 241 residues: 2,3,4,5-tetrahydropyridine-2,6-dicarboxylate N-acetyltransferase (241 aa).

This sequence belongs to the transferase hexapeptide repeat family. DapH subfamily.

It catalyses the reaction (S)-2,3,4,5-tetrahydrodipicolinate + acetyl-CoA + H2O = L-2-acetamido-6-oxoheptanedioate + CoA. It participates in amino-acid biosynthesis; L-lysine biosynthesis via DAP pathway; LL-2,6-diaminopimelate from (S)-tetrahydrodipicolinate (acetylase route): step 1/3. In terms of biological role, catalyzes the transfer of an acetyl group from acetyl-CoA to tetrahydrodipicolinate. This Thermoanaerobacter sp. (strain X514) protein is 2,3,4,5-tetrahydropyridine-2,6-dicarboxylate N-acetyltransferase.